The sequence spans 327 residues: Mitochondrial substrate carrier family protein A (327 aa).

The segment at 1-36 (MVINNQNNNNQNNNQNNNNKNDNLNNSTTTTTTTAT) is disordered. Topologically, residues 1-48 (MVINNQNNNNQNNNQNNNNKNDNLNNSTTTTTTTATTTKSSTLFHSND) are mitochondrial intermembrane. Solcar repeat units lie at residues 43–132 (LFHS…FKRM), 140–224 (ISVI…IKEK), and 233–323 (PPLY…AITL). The helical transmembrane segment at 49 to 66 (FFSGLIAGIVSRTLTAPL) threads the bilayer. Residues 67 to 106 (ERIKILNQVEVILKDGTKYNRIIPAFKVIIKEEGIAGLFR) lie on the Mitochondrial matrix side of the membrane. A helical transmembrane segment spans residues 107–127 (GNFVNIIKAGPQSAIRFYSYG). Residues 128–145 (AFKRMASEPDGSISVINR) lie on the Mitochondrial intermembrane side of the membrane. The helical transmembrane segment at 146-166 (MWAGASSGVVSVALTHPLDVI) threads the bilayer. The Mitochondrial matrix portion of the chain corresponds to 167–192 (KTHITVIAPTAATIKNVTKGIYRDLG). The helical transmembrane segment at 193-213 (IIGFFRGLSAGILNIAPFAAL) threads the bilayer. The Mitochondrial intermembrane portion of the chain corresponds to 214–238 (NFTFYETIKEKTQQYILKSPPLYAP). A helical membrane pass occupies residues 239–259 (SIYGAISGGLTMTILYPLDVV). Topologically, residues 260-303 (KRRIMLQHFDRNQLPIYKNFIDAIIKITKTEGISALYKGIRPAY) are mitochondrial matrix. A helical membrane pass occupies residues 304–324 (LKVIPTVSINFLIYEGAITLF). Topologically, residues 325-327 (EKK) are mitochondrial intermembrane.

Belongs to the mitochondrial carrier (TC 2.A.29) family.

Its subcellular location is the mitochondrion inner membrane. In terms of biological role, calcium-dependent mitochondrial solute carrier. Mitochondrial solute carriers shuttle metabolites, nucleotides, and cofactors through the mitochondrial inner membrane. The chain is Mitochondrial substrate carrier family protein A (mcfA) from Dictyostelium discoideum (Social amoeba).